Consider the following 182-residue polypeptide: Large ribosomal subunit protein uL5 (182 aa).

It belongs to the universal ribosomal protein uL5 family. As to quaternary structure, part of the 50S ribosomal subunit; part of the 5S rRNA/L5/L18/L25 subcomplex. Contacts the 5S rRNA and the P site tRNA. Forms a bridge to the 30S subunit in the 70S ribosome.

Its function is as follows. This is one of the proteins that bind and probably mediate the attachment of the 5S RNA into the large ribosomal subunit, where it forms part of the central protuberance. In the 70S ribosome it contacts protein S13 of the 30S subunit (bridge B1b), connecting the 2 subunits; this bridge is implicated in subunit movement. Contacts the P site tRNA; the 5S rRNA and some of its associated proteins might help stabilize positioning of ribosome-bound tRNAs. This is Large ribosomal subunit protein uL5 from Nostoc punctiforme (strain ATCC 29133 / PCC 73102).